The following is a 109-amino-acid chain: Oncomodulin (109 aa).

Serine 2 is subject to N-acetylserine. EF-hand domains lie at methionine 39–glycine 74 and leucine 78–serine 109. 10 residues coordinate Ca(2+): aspartate 52, aspartate 54, serine 56, tyrosine 58, glutamate 63, aspartate 91, aspartate 93, aspartate 95, lysine 97, and glutamate 102.

The protein belongs to the parvalbumin family. Abundant in the organ of Corti.

Its function is as follows. Has some calmodulin-like activity with respect to enzyme activation and growth regulation. Binds two calcium ions. This is Oncomodulin (OCM) from Cavia porcellus (Guinea pig).